Consider the following 61-residue polypeptide: Large ribosomal subunit protein uL30 (61 aa).

It belongs to the universal ribosomal protein uL30 family. Part of the 50S ribosomal subunit.

The sequence is that of Large ribosomal subunit protein uL30 from Saccharophagus degradans (strain 2-40 / ATCC 43961 / DSM 17024).